The sequence spans 426 residues: Putative competence-damage inducible protein (426 aa).

It belongs to the CinA family.

In Symbiobacterium thermophilum (strain DSM 24528 / JCM 14929 / IAM 14863 / T), this protein is Putative competence-damage inducible protein.